The primary structure comprises 385 residues: GTPase Obg (385 aa).

Positions 1-159 constitute an Obg domain; that stretch reads MKFVDEATIL…REIQLELMLL (159 aa). The region spanning 160 to 333 is the OBG-type G domain; that stretch reads ADVGMLGLPN…LCWDVMAFIN (174 aa). GTP contacts are provided by residues 166-173, 191-195, 213-216, 283-286, and 314-316; these read GLPNAGKS, FTTLV, DIPG, NKAD, and SAA. Mg(2+)-binding residues include S173 and T193. Acidic residues predominate over residues 362 to 379; it reads QQEEAEETLDDDWDEDGV. Positions 362–385 are disordered; sequence QQEEAEETLDDDWDEDGVETIYQR.

It belongs to the TRAFAC class OBG-HflX-like GTPase superfamily. OBG GTPase family. Monomer. Requires Mg(2+) as cofactor.

The protein resides in the cytoplasm. In terms of biological role, an essential GTPase which binds GTP, GDP and possibly (p)ppGpp with moderate affinity, with high nucleotide exchange rates and a fairly low GTP hydrolysis rate. Plays a role in control of the cell cycle, stress response, ribosome biogenesis and in those bacteria that undergo differentiation, in morphogenesis control. The chain is GTPase Obg from Sodalis glossinidius (strain morsitans).